The following is a 301-amino-acid chain: ATP synthase gamma chain (301 aa).

This sequence belongs to the ATPase gamma chain family. F-type ATPases have 2 components, CF(1) - the catalytic core - and CF(0) - the membrane proton channel. CF(1) has five subunits: alpha(3), beta(3), gamma(1), delta(1), epsilon(1). CF(0) has three main subunits: a, b and c.

Its subcellular location is the cell inner membrane. Functionally, produces ATP from ADP in the presence of a proton gradient across the membrane. The gamma chain is believed to be important in regulating ATPase activity and the flow of protons through the CF(0) complex. This Bordetella bronchiseptica (strain ATCC BAA-588 / NCTC 13252 / RB50) (Alcaligenes bronchisepticus) protein is ATP synthase gamma chain.